The sequence spans 184 residues: RNA polymerase sigma factor HrpL (184 aa).

The Polymerase core binding signature appears at 49–62 (DILQCVFLEALRNE). The H-T-H motif DNA-binding region spans 151 to 170 (YQETANTLGVPIGTVRSRLS).

It belongs to the sigma-70 factor family. ECF subfamily.

Sigma factors are initiation factors that promote the attachment of RNA polymerase to specific initiation sites and are then released. This sigma factor is involved in the activation of hprD as well as other hrp loci which are involved in plant pathogenicity, hrmA and avr genes. This is RNA polymerase sigma factor HrpL (hrpL) from Pseudomonas syringae pv. syringae.